A 131-amino-acid chain; its full sequence is Small ribosomal subunit protein bS6 (131 aa).

The interval 94 to 131 (DAVTEESQLAKNADEKRARKATTRRPDSNDDNDNHSDD) is disordered. A compositionally biased stretch (basic and acidic residues) spans 117 to 131 (RRPDSNDDNDNHSDD).

This sequence belongs to the bacterial ribosomal protein bS6 family.

Binds together with bS18 to 16S ribosomal RNA. The chain is Small ribosomal subunit protein bS6 from Psychrobacter cryohalolentis (strain ATCC BAA-1226 / DSM 17306 / VKM B-2378 / K5).